A 200-amino-acid chain; its full sequence is Glycerol-3-phosphate acyltransferase (200 aa).

The next 5 helical transmembrane spans lie at 2-22 (FNIPAVAVSYLIGSLSFAVIV), 51-71 (KAAALTLLGDAAKGLVAVLLA), 84-104 (AIAAVALAALVGHMWPVFFGF), 114-134 (LGVLLALSPATALVCALIWLV), and 159-179 (FFMPHVSWVWATVAIALLVLF).

It belongs to the PlsY family. Probably interacts with PlsX.

Its subcellular location is the cell inner membrane. It catalyses the reaction an acyl phosphate + sn-glycerol 3-phosphate = a 1-acyl-sn-glycero-3-phosphate + phosphate. The protein operates within lipid metabolism; phospholipid metabolism. Its function is as follows. Catalyzes the transfer of an acyl group from acyl-phosphate (acyl-PO(4)) to glycerol-3-phosphate (G3P) to form lysophosphatidic acid (LPA). This enzyme utilizes acyl-phosphate as fatty acyl donor, but not acyl-CoA or acyl-ACP. In Neisseria meningitidis serogroup B (strain ATCC BAA-335 / MC58), this protein is Glycerol-3-phosphate acyltransferase.